Reading from the N-terminus, the 339-residue chain is Serpentine receptor class r-10 (339 aa).

Topologically, residues Met-1–Asp-11 are extracellular. The helical transmembrane segment at Thr-12 to Leu-32 threads the bilayer. At Lys-33 to Tyr-42 the chain is on the cytoplasmic side. The chain crosses the membrane as a helical span at residues Lys-43–Leu-63. The Extracellular segment spans residues Arg-64–Asn-92. N-linked (GlcNAc...) asparagine glycosylation is found at Asn-71 and Asn-83. A helical membrane pass occupies residues Ser-93–Tyr-113. The Cytoplasmic portion of the chain corresponds to Arg-114–Thr-131. Residues Leu-132–Phe-152 traverse the membrane as a helical segment. The Extracellular segment spans residues Leu-153 to Asn-201. An N-linked (GlcNAc...) asparagine glycan is attached at Asn-179. A helical transmembrane segment spans residues Leu-202–Cys-222. The Cytoplasmic portion of the chain corresponds to Gly-223–Gln-254. Residues Thr-255 to Phe-275 form a helical membrane-spanning segment. The Extracellular segment spans residues Asp-276–Asn-284. Residues Phe-285–Ile-305 traverse the membrane as a helical segment. Residues Arg-306–Thr-339 are Cytoplasmic-facing.

Belongs to the nematode receptor-like protein str family. In terms of assembly, interacts with odr-4. In terms of tissue distribution, strongly expressed in the sensory cilia of AWA olfactory neurons, and at low levels in the CEP neurons.

It localises to the cell projection. It is found in the cilium membrane. An odorant receptor which affects chemotaxis to the volatile odorant diacetyl. Specifies AWA neuronal cell fate via the odr-7 pathway. This is Serpentine receptor class r-10 from Caenorhabditis elegans.